We begin with the raw amino-acid sequence, 919 residues long: TRPM8 channel-associated factor 2 (919 aa).

In terms of domain architecture, Peptidase M60 spans 543–842; it reads DVWMSTGLYL…TYLQLQEVFG (300 aa).

Belongs to the TCAF family. Interacts with TRPM8 (via N-terminus and C-terminus domains); the interaction inhibits TRPM8 channel activity. Interacts with TRPV6.

The protein localises to the cell membrane. Its function is as follows. Negatively regulates the plasma membrane cation channel TRPM8 activity. Involved in the recruitment of TRPM8 to the cell surface. Promotes prostate cancer cell migration stimulation in a TRPM8-dependent manner. This Mus musculus (Mouse) protein is TRPM8 channel-associated factor 2.